Consider the following 817-residue polypeptide: Probable beta-glucosidase G (817 aa).

The signal sequence occupies residues Met1–Gly20. Residues Asn40, Asn58, Asn229, and Asn276 are each glycosylated (N-linked (GlcNAc...) asparagine). Asp304 is a catalytic residue. Asn343, Asn350, Asn402, Asn507, Asn563, Asn584, Asn623, Asn662, Asn679, and Asn715 each carry an N-linked (GlcNAc...) asparagine glycan.

Belongs to the glycosyl hydrolase 3 family.

It localises to the secreted. It catalyses the reaction Hydrolysis of terminal, non-reducing beta-D-glucosyl residues with release of beta-D-glucose.. It functions in the pathway glycan metabolism; cellulose degradation. Its function is as follows. Beta-glucosidases are one of a number of cellulolytic enzymes involved in the degradation of cellulosic biomass. Catalyzes the last step releasing glucose from the inhibitory cellobiose. This is Probable beta-glucosidase G (bglG) from Aspergillus terreus (strain NIH 2624 / FGSC A1156).